The sequence spans 571 residues: Proline--tRNA ligase (571 aa).

It belongs to the class-II aminoacyl-tRNA synthetase family. ProS type 1 subfamily. In terms of assembly, homodimer.

Its subcellular location is the cytoplasm. The enzyme catalyses tRNA(Pro) + L-proline + ATP = L-prolyl-tRNA(Pro) + AMP + diphosphate. Functionally, catalyzes the attachment of proline to tRNA(Pro) in a two-step reaction: proline is first activated by ATP to form Pro-AMP and then transferred to the acceptor end of tRNA(Pro). As ProRS can inadvertently accommodate and process non-cognate amino acids such as alanine and cysteine, to avoid such errors it has two additional distinct editing activities against alanine. One activity is designated as 'pretransfer' editing and involves the tRNA(Pro)-independent hydrolysis of activated Ala-AMP. The other activity is designated 'posttransfer' editing and involves deacylation of mischarged Ala-tRNA(Pro). The misacylated Cys-tRNA(Pro) is not edited by ProRS. In Acinetobacter baumannii (strain ATCC 17978 / DSM 105126 / CIP 53.77 / LMG 1025 / NCDC KC755 / 5377), this protein is Proline--tRNA ligase.